The chain runs to 194 residues: 7-methyl-GTP pyrophosphatase (194 aa).

D67 (proton acceptor) is an active-site residue.

Belongs to the Maf family. YceF subfamily. It depends on a divalent metal cation as a cofactor.

The protein resides in the cytoplasm. It carries out the reaction N(7)-methyl-GTP + H2O = N(7)-methyl-GMP + diphosphate + H(+). In terms of biological role, nucleoside triphosphate pyrophosphatase that hydrolyzes 7-methyl-GTP (m(7)GTP). May have a dual role in cell division arrest and in preventing the incorporation of modified nucleotides into cellular nucleic acids. This Pseudoalteromonas atlantica (strain T6c / ATCC BAA-1087) protein is 7-methyl-GTP pyrophosphatase.